An 869-amino-acid chain; its full sequence is MAADVEGDVYVLVEHPFEYTGKDGRRIAIQPNERYRLLRRSTEHWWHVRREPGGRPFYLPAQYVRELPALGDPAPAPQPSVPQQRPAVPEPLAYDYRFVSTPVGADGSSAEPRGRASSLCGPARQRTGGQRNSLAPGGPACLYVRPAAPVRPAQSLDDLARGGTAPPAGLLGSAGHFKASSVAGSWVCPRPLAPSDSENVYEAIPDLRCPPRAESPKQVDDPPEPVYANVERQPRATSPRSAAAPPRLSPVWETHTDTGTGRPYYYNPDTGVTTWESPFETPEGTTSPATSRASVGSGESLETEWGQYWDEESRRVFFYNPLTGETAWEDETEELEEDHQEQLEMQPSLSPRSPGQQRPPTPETDYPELLASYPEEDYSPVGSFSDPGPASPLVAPPGWSCQITPDKQMLYTNQFTQEQWVRLEDQHGKPYFYNPEDSSVQWELPQVPIPAPRSVRKSSQDSDTPAQASPPEEKIKTLDKAGVLHRTKTVDKGKRLRKKHWSTSWTVLEGGVLTFFKDSKTSAAGGLRQPSKLSTPEYTVELKGASLSWAPKDKSSKKNVLELRSRDGSEYLIQHDSEAIISTWHKAIAEGISELSADLLQGEEGEPSSADFGSSERLGSWREEDVRQNAASPSLSPGGLESDLSRVRHKLRKFLQRRPTLQSLRDKGYIKDQVFGCALAQLCERERSPVPRFVQQCIRTVEARGLDIDGLYRISGNLATIQKLRYKVDHDERLDLDDGRWEDVHVITGALKLFFRELPEPLFPFSHFHQFIAAIKLQDPAQRSRCVRDLVRTLPAPNQDTLRLLIQHLCRVIEHGEQNRMTVQNVAIVFGPTLLRPEMEEASMPMTMVFQNQVVELILHQCADIFPPH.

Positions 6–69 (EGDVYVLVEH…PAQYVRELPA (64 aa)) constitute an SH3 domain. A28 carries the phosphotyrosine modification. Residues 104–134 (GADGSSAEPRGRASSLCGPARQRTGGQRNSL) form a disordered region. Phosphoserine is present on residues S155, S215, and S249. 2 disordered regions span residues 208-300 (RCPP…SGES) and 331-401 (ETEE…GWSC). A compositionally biased stretch (basic and acidic residues) spans 209-220 (CPPRAESPKQVD). Positions 235–250 (RATSPRSAAAPPRLSP) are enriched in low complexity. The region spanning 246–280 (PRLSPVWETHTDTGTGRPYYYNPDTGVTTWESPFE) is the WW 1 domain. Polar residues predominate over residues 283 to 294 (EGTTSPATSRAS). Residues 299–333 (ESLETEWGQYWDEESRRVFFYNPLTGETAWEDETE) enclose the WW 2 domain. A compositionally biased stretch (polar residues) spans 345-356 (MQPSLSPRSPGQ). Position 350 is a phosphoserine (S350). In terms of domain architecture, WW 3 spans 414 to 447 (QFTQEQWVRLEDQHGKPYFYNPEDSSVQWELPQV). Disordered stretches follow at residues 449–477 (IPAP…KIKT) and 623–642 (EEDV…GLES). S459 and S462 each carry phosphoserine. A Phosphothreonine modification is found at T464. The residue at position 469 (S469) is a Phosphoserine. Residues 477–593 (TLDKAGVLHR…WHKAIAEGIS (117 aa)) form the PH domain. Phosphoserine is present on residues S632 and S636. Residues 677–866 (CALAQLCERE…LILHQCADIF (190 aa)) enclose the Rho-GAP domain.

Interacts with SH3KBP1/CIN85. Widely expressed. Highly expressed in kidney, lung, small intestine and thymus.

It is found in the cytoplasm. Its subcellular location is the membrane. Its function is as follows. Rho GTPase-activating protein which may be involved in clathrin-mediated endocytosis. GTPase activators for the Rho-type GTPases act by converting them to an inactive GDP-bound state. Has activity toward CDC42 and RAC1. This is Rho GTPase-activating protein 27 (Arhgap27) from Mus musculus (Mouse).